A 397-amino-acid chain; its full sequence is Metallophosphoesterase 1 (397 aa).

A helical transmembrane segment spans residues 27 to 47 (IAVVFAVLLFCEFLIYYLAIF). A divalent metal cation-binding residues include Asp77, Asp119, Asn157, His250, His304, and His306. A helical membrane pass occupies residues 357 to 377 (VVLIIYCGMVGFLVVLTLTHF). The Di-lysine motif motif lies at 393 to 397 (KRKTR).

The protein belongs to the metallophosphoesterase superfamily. MPPE1 family. In terms of assembly, interacts with GPI-anchor proteins (via the GPI portion). Interacts with TMED10. It depends on Mn(2+) as a cofactor.

It localises to the endoplasmic reticulum-Golgi intermediate compartment membrane. Metallophosphoesterase that catalyzes the removal of a side-chain ethanolamine-phosphate (EtNP) from the second mannose of the GPI-anchor protein intermediate. Participates in the glycan remodeling steps of GPI-anchor maturation to allow an efficient transport of GPI-anchor proteins from the endoplasmic reticulum to the Golgi. The chain is Metallophosphoesterase 1 from Pongo abelii (Sumatran orangutan).